The following is a 100-amino-acid chain: Replication restart protein PriB (100 aa).

Residues 1-100 (MTNRMELSGT…VLHADNITQI (100 aa)) form the SSB domain.

The protein belongs to the PriB family. As to quaternary structure, homodimer. Interacts with PriA and DnaT. Component of the replication restart primosome. Primosome assembly occurs via a 'hand-off' mechanism. PriA binds to replication forks, subsequently PriB then DnaT bind; DnaT then displaces ssDNA to generate the helicase loading substrate.

In terms of biological role, involved in the restart of stalled replication forks, which reloads the replicative helicase on sites other than the origin of replication; the PriA-PriB pathway is the major replication restart pathway. During primosome assembly it facilitates complex formation between PriA and DnaT on DNA; stabilizes PriA on DNA. Stimulates the DNA unwinding activity of PriA helicase. This Vibrio parahaemolyticus serotype O3:K6 (strain RIMD 2210633) protein is Replication restart protein PriB.